The following is a 1162-amino-acid chain: Nucleoporin nup132 (1162 aa).

This sequence belongs to the nucleoporin Nup133 family. Component of the npc107-120 complex which consists of nup85, nup107, nup120, nup131, nup132 and seh1. Interacts with nup107.

Its subcellular location is the nucleus envelope. Functionally, functions as a component of the nuclear pore complex (NPC). NPC components, collectively referred to as nucleoporins (NUPs), can play the role of both NPC structural components and of docking or interaction partners for transiently associated nuclear transport factors. Active directional transport is assured by both, a Phe-Gly (FG) repeat affinity gradient for these transport factors across the NPC and a transport cofactor concentration gradient across the nuclear envelope. This chain is Nucleoporin nup132 (nup132), found in Schizosaccharomyces pombe (strain 972 / ATCC 24843) (Fission yeast).